The following is an 82-amino-acid chain: MKRNNMKRARMEQSRRPKKNPLKAEGIEQVDYKNYALLRKFISDRGKIRSRRVTGLTPQQQREVATAIKNAREMALLPFNSR.

The tract at residues 1–25 (MKRNNMKRARMEQSRRPKKNPLKAE) is disordered.

It belongs to the bacterial ribosomal protein bS18 family. As to quaternary structure, part of the 30S ribosomal subunit. Forms a tight heterodimer with protein bS6.

In terms of biological role, binds as a heterodimer with protein bS6 to the central domain of the 16S rRNA, where it helps stabilize the platform of the 30S subunit. This is Small ribosomal subunit protein bS18 from Corynebacterium urealyticum (strain ATCC 43042 / DSM 7109).